Reading from the N-terminus, the 790-residue chain is Centrosomal protein of 78 kDa (790 aa).

5 disordered regions span residues 325-345 (YQWVTSPSSKEPSKTAKQRKK), 362-385 (GLATKKPSSNGRKQGLGKDCYAPN), 428-462 (VTVTVESPSSSETDETEDSSESVQEAPQKTSIKEE), 654-732 (AKTG…LNEP), and 756-790 (KTIKSKPNLLEHSESDTLGSDFELQERVHSSAHLT). Residues serine 330 and serine 332 each carry the phosphoserine modification. Residues 428–438 (VTVTVESPSSS) are compositionally biased toward low complexity. Residues 455–510 (QKTSIKEETLQEKLEECLRQLKEERVIRLKADKRVSELEHENAQLRNINFSLSEAL) are a coiled coil. 2 stretches are compositionally biased toward basic and acidic residues: residues 693–708 (PSRRPSAERHPRKDLL) and 721–732 (GPGDRRSLLNEP).

This sequence belongs to the CEP78 family. As to quaternary structure, interacts with PLK4. Interacts with FAM161A. Interacts with IFT20; regulating IFT20 stability and localization. Interacts with TTC21A; regulating TTC21A stability and localization. Interacts with USP16; promoting USP16-dependent deubiquitination of tektins. Interacts with DCAF1/VPRBP; promoting localization of the EDVP complex to centrosomes. Interacts with CEP350; promoting CEP78 localization to centrosome and centriole. In terms of tissue distribution, expressed by photoreceptor cells in the retina.

The protein localises to the cytoplasm. The protein resides in the cytoskeleton. It is found in the microtubule organizing center. It localises to the centrosome. Its subcellular location is the centriole. The protein localises to the cilium basal body. Centriole wall protein that localizes to mature centrioles and regulates centriole and cilia biogenesis. Involved in centrosome duplication: required for efficient PLK4 centrosomal localization and PLK4-induced overduplication of centrioles. Involved in cilium biogenesis and controls cilium length. Acts as a regulator of protein stability by preventing ubiquitination of centrosomal proteins, such as CCP110 and tektins. Associates with the EDVP complex, preventing ubiquitination and degradation of CCP110. Promotes deubiquitination of tektin proteins (TEKT1, TEKT2, TEK3, TEKT4 and TEKT5) via its interaction with USP16. The sequence is that of Centrosomal protein of 78 kDa from Mus musculus (Mouse).